The chain runs to 61 residues: Large ribosomal subunit protein uL30 (61 aa).

Belongs to the universal ribosomal protein uL30 family. As to quaternary structure, part of the 50S ribosomal subunit.

The polypeptide is Large ribosomal subunit protein uL30 (Chlorobaculum tepidum (strain ATCC 49652 / DSM 12025 / NBRC 103806 / TLS) (Chlorobium tepidum)).